The chain runs to 994 residues: Leucine-rich repeat receptor-like kinase protein FLORAL ORGAN NUMBER1 (994 aa).

The N-terminal stretch at 1–17 (MPPTLLLLLLLLPPSLA) is a signal peptide. LRR repeat units follow at residues 73–93 (AINL…IALL), 94–117 (DSLA…LPTL), 118–141 (PSLR…DSGG), 147–171 (FPSL…SASH), 172–194 (ARLR…SYGD), 195–219 (LAAL…LSRL), 244–268 (LGAL…LGRL), 269–292 (QRLD…LGDL), 293–316 (SSLA…LANL), 318–340 (NLKL…VAGF), 341–364 (AQLE…LGKN), 365–388 (GRLK…LCAG), 390–412 (RLEM…LGDC), 413–436 (KTLT…LFNL), 438–459 (QANM…VIGG), 460–483 (DKIG…IGNL), 484–507 (PALQ…IGNL), 509–531 (NLSR…LIRC), 533–555 (SLAA…ITSL), 556–579 (KILC…MSNM), and 581–604 (SLTT…QFLV). N-linked (GlcNAc...) asparagine glycans are attached at residues Asn-75, Asn-98, Asn-124, Asn-129, and Asn-159. Residue Asn-256 is glycosylated (N-linked (GlcNAc...) asparagine). An N-linked (GlcNAc...) asparagine glycan is attached at Asn-315. N-linked (GlcNAc...) asparagine glycosylation is present at Asn-352. N-linked (GlcNAc...) asparagine glycans are attached at residues Asn-495, Asn-509, and Asn-514. 2 N-linked (GlcNAc...) asparagine glycosylation sites follow: Asn-562 and Asn-578. Residue Asn-606 is glycosylated (N-linked (GlcNAc...) asparagine). The chain crosses the membrane as a helical span at residues 647 to 667 (KKMLVALVAAFAAVAVAFLGA). A Protein kinase domain is found at 704–978 (VKEDNIIGKG…TMREVVHMLS (275 aa)). Residues 710 to 718 (IGKGGAGIV) and Lys-731 each bind ATP. The active-site Proton acceptor is Asp-828.

This sequence belongs to the protein kinase superfamily. Ser/Thr protein kinase family. Expressed in shoot apical meristem, and after transition to the reproductive phase, detected in the inflorescence and the floral meristems. Expressed uniformly throughout the meristems. Expressed also in floral organ primordia, such as the palea, lemma, lodicules, stamens, carpels and ovules.

It localises to the membrane. The catalysed reaction is L-seryl-[protein] + ATP = O-phospho-L-seryl-[protein] + ADP + H(+). It carries out the reaction L-threonyl-[protein] + ATP = O-phospho-L-threonyl-[protein] + ADP + H(+). Receptor-like kinase protein that regulates the size of the floral meristem. The chain is Leucine-rich repeat receptor-like kinase protein FLORAL ORGAN NUMBER1 (FON1) from Oryza sativa subsp. japonica (Rice).